Reading from the N-terminus, the 253-residue chain is Phosphate import ATP-binding protein PstB (253 aa).

The region spanning 5–248 is the ABC transporter domain; it reads IETINLHVYY…PEHELTEKYV (244 aa). ATP is bound at residue 37-44; it reads GPSGCGKS.

It belongs to the ABC transporter superfamily. Phosphate importer (TC 3.A.1.7) family. As to quaternary structure, the complex is composed of two ATP-binding proteins (PstB), two transmembrane proteins (PstC and PstA) and a solute-binding protein (PstS).

It is found in the cell membrane. It catalyses the reaction phosphate(out) + ATP + H2O = ADP + 2 phosphate(in) + H(+). Part of the ABC transporter complex PstSACB involved in phosphate import. Responsible for energy coupling to the transport system. This is Phosphate import ATP-binding protein PstB from Pyrococcus furiosus (strain ATCC 43587 / DSM 3638 / JCM 8422 / Vc1).